The primary structure comprises 225 residues: 2-amino-5-formylamino-6-ribosylaminopyrimidin-4(3H)-one 5'-monophosphate deformylase (225 aa).

Fe cation is bound by residues Glu-28, His-30, Asp-39, and His-107.

The protein belongs to the creatininase superfamily. FAPy deformylase family. In terms of assembly, homodimer. It depends on Fe(2+) as a cofactor. Requires Zn(2+) as cofactor.

It carries out the reaction 2-amino-5-formylamino-6-(5-phospho-D-ribosylamino)pyrimidin-4(3H)-one + H2O = 2,5-diamino-6-(1-D-ribosylamino)pyrimidin-4(3H)-one 5'-phosphate + formate + H(+). It functions in the pathway cofactor biosynthesis; coenzyme F420 biosynthesis. It participates in cofactor biosynthesis; riboflavin biosynthesis. Functionally, catalyzes the hydrolysis of the formamide of 2-amino-5-formylamino-6-ribosylamino-4(3H)-pyrimidinone 5'-monophosphate (FAPy) to form 2,5-diamino-6-ribosylamino-4(3H)-pyrimidinone 5'-phosphate (APy). This chain is 2-amino-5-formylamino-6-ribosylaminopyrimidin-4(3H)-one 5'-monophosphate deformylase, found in Methanocaldococcus fervens (strain DSM 4213 / JCM 15782 / AG86) (Methanococcus fervens).